A 225-amino-acid polypeptide reads, in one-letter code: Probable methylthioribulose-1-phosphate dehydratase (225 aa).

A substrate-binding site is contributed by Cys86. Residues His104 and His106 each contribute to the Zn(2+) site. The active-site Proton donor/acceptor is Glu127. Position 183 (His183) interacts with Zn(2+).

This sequence belongs to the aldolase class II family. MtnB subfamily. Zn(2+) serves as cofactor.

The protein resides in the cytoplasm. It catalyses the reaction 5-(methylsulfanyl)-D-ribulose 1-phosphate = 5-methylsulfanyl-2,3-dioxopentyl phosphate + H2O. It participates in amino-acid biosynthesis; L-methionine biosynthesis via salvage pathway; L-methionine from S-methyl-5-thio-alpha-D-ribose 1-phosphate: step 2/6. In terms of biological role, catalyzes the dehydration of methylthioribulose-1-phosphate (MTRu-1-P) into 2,3-diketo-5-methylthiopentyl-1-phosphate (DK-MTP-1-P). This chain is Probable methylthioribulose-1-phosphate dehydratase, found in Leishmania infantum.